Consider the following 164-residue polypeptide: Putative protein ZNF321 (164 aa).

The chain is Putative protein ZNF321 (ZNF321P) from Homo sapiens (Human).